The following is a 396-amino-acid chain: Elongation factor Tu (396 aa).

The region spanning 10 to 206 is the tr-type G domain; that stretch reads KPHVNVGTIG…ALDSYIPEPE (197 aa). A G1 region spans residues 19–26; that stretch reads GHVDHGKT. 19–26 contacts GTP; the sequence is GHVDHGKT. T26 serves as a coordination point for Mg(2+). The tract at residues 60–64 is G2; the sequence is GITIN. The tract at residues 81–84 is G3; the sequence is DCPG. GTP-binding positions include 81-85 and 136-139; these read DCPGH and NKCD. Residues 136–139 are G4; the sequence is NKCD. The tract at residues 174–176 is G5; sequence SAL.

Belongs to the TRAFAC class translation factor GTPase superfamily. Classic translation factor GTPase family. EF-Tu/EF-1A subfamily. Monomer.

It is found in the cytoplasm. The enzyme catalyses GTP + H2O = GDP + phosphate + H(+). Its function is as follows. GTP hydrolase that promotes the GTP-dependent binding of aminoacyl-tRNA to the A-site of ribosomes during protein biosynthesis. This is Elongation factor Tu from Acinetobacter baumannii (strain ATCC 17978 / DSM 105126 / CIP 53.77 / LMG 1025 / NCDC KC755 / 5377).